The sequence spans 843 residues: Envelope glycoprotein gp160 (843 aa).

An N-terminal signal peptide occupies residues 1–31 (MRATEIRKNYQHLWKGGTLLLGMLMICSAAE). Residues 32–671 (QLWVTVYYGV…ITKWLWYIKI (640 aa)) are Extracellular-facing. Cysteine 53 and cysteine 73 are disulfide-bonded. N-linked (GlcNAc...) asparagine; by host glycans are attached at residues asparagine 87, asparagine 129, asparagine 135, asparagine 138, asparagine 154, asparagine 158, asparagine 184, asparagine 193, asparagine 230, asparagine 237, asparagine 258, asparagine 272, asparagine 285, asparagine 291, asparagine 297, asparagine 327, and asparagine 351. Disulfide bonds link cysteine 118/cysteine 201, cysteine 125/cysteine 192, cysteine 130/cysteine 155, cysteine 214/cysteine 243, and cysteine 224/cysteine 235. A V1 region spans residues 130 to 154 (CTDLRNATNTTSSSWETMEKGEIKN). Positions 155–192 (CSFNITTSIRDKVQKEYALFYNLDVVPIDNASYRLISC) are V2. Residues 292–325 (CTRPNNNTRKSINIGPGRALYTTGEIIGDIRQAH) are V3. Cysteine 292 and cysteine 326 are oxidised to a cystine. The segment at 359–369 (SSGGDPEIVTH) is CD4-binding loop. Intrachain disulfides connect cysteine 373–cysteine 432 and cysteine 380–cysteine 405. The V4 stretch occupies residues 380–405 (CNSTQLFTWNDTRKLNNTGRNITLPC). Asparagine 381, asparagine 389, asparagine 395, asparagine 400, asparagine 435, and asparagine 450 each carry an N-linked (GlcNAc...) asparagine; by host glycan. 2 V5 regions span residues 448–458 (DTNGTEIFRPG) and 450–458 (NGTEIFRPG). The tract at residues 499–519 (AVGLGALFLGFLGAAGSTMGA) is fusion peptide. Positions 561 to 579 (KQLQARVLAVERYLRDQQL) are immunosuppression. Cysteines 585 and 591 form a disulfide. 4 N-linked (GlcNAc...) asparagine; by host glycosylation sites follow: asparagine 598, asparagine 603, asparagine 612, and asparagine 624. A coiled-coil region spans residues 620-654 (REIDNYTHIIYSLIEQSQNQQEKNEQELLALDKWA). Positions 649–670 (ALDKWASLWNWFDITKWLWYIK) are MPER; binding to GalCer. The chain crosses the membrane as a helical span at residues 672–692 (FIMIVGGLIGLRIVFVVLSIV). Residues 693–843 (NRVRQGYSPL…IRQGLERALL (151 aa)) lie on the Cytoplasmic side of the membrane. The YXXL motif; contains endocytosis signal motif lies at 699 to 702 (YSPL). The tract at residues 706 to 731 (THLPAQRGPDRPDGIEEEGGERDRDR) is disordered. Cysteine 751 carries S-palmitoyl cysteine; by host lipidation. A Di-leucine internalization motif motif is present at residues 842-843 (LL).

It belongs to the HIV-1 env protein family. The mature envelope protein (Env) consists of a homotrimer of non-covalently associated gp120-gp41 heterodimers. The resulting complex protrudes from the virus surface as a spike. There seems to be as few as 10 spikes on the average virion. Interacts with host CD4, CCR5 and CXCR4. Gp120 also interacts with the C-type lectins CD209/DC-SIGN and CLEC4M/DC-SIGNR (collectively referred to as DC-SIGN(R)). Gp120 and gp41 interact with GalCer. Gp120 interacts with host ITGA4/ITGB7 complex; on CD4+ T-cells, this interaction results in rapid activation of integrin ITGAL/LFA-1, which facilitates efficient cell-to-cell spreading of HIV-1. Gp120 interacts with cell-associated heparan sulfate; this interaction increases virus infectivity on permissive cells and may be involved in infection of CD4- cells. In terms of assembly, the mature envelope protein (Env) consists of a homotrimer of non-covalently associated gp120-gp41 heterodimers. The resulting complex protrudes from the virus surface as a spike. There seems to be as few as 10 spikes on the average virion. In terms of processing, highly glycosylated by host. The high number of glycan on the protein is reffered to as 'glycan shield' because it contributes to hide protein sequence from adaptive immune system. Post-translationally, palmitoylation of the transmembrane protein and of Env polyprotein (prior to its proteolytic cleavage) is essential for their association with host cell membrane lipid rafts. Palmitoylation is therefore required for envelope trafficking to classical lipid rafts, but not for viral replication. Specific enzymatic cleavages in vivo yield mature proteins. Envelope glycoproteins are synthesized as an inactive precursor that is heavily N-glycosylated and processed likely by host cell furin in the Golgi to yield the mature SU and TM proteins. The cleavage site between SU and TM requires the minimal sequence [KR]-X-[KR]-R. About 2 of the 9 disulfide bonds of gp41 are reduced by P4HB/PDI, following binding to CD4 receptor.

Its subcellular location is the virion membrane. The protein resides in the host cell membrane. It is found in the host endosome membrane. Functionally, oligomerizes in the host endoplasmic reticulum into predominantly trimers. In a second time, gp160 transits in the host Golgi, where glycosylation is completed. The precursor is then proteolytically cleaved in the trans-Golgi and thereby activated by cellular furin or furin-like proteases to produce gp120 and gp41. Attaches the virus to the host lymphoid cell by binding to the primary receptor CD4. This interaction induces a structural rearrangement creating a high affinity binding site for a chemokine coreceptor like CXCR4 and/or CCR5. Acts as a ligand for CD209/DC-SIGN and CLEC4M/DC-SIGNR, which are respectively found on dendritic cells (DCs), and on endothelial cells of liver sinusoids and lymph node sinuses. These interactions allow capture of viral particles at mucosal surfaces by these cells and subsequent transmission to permissive cells. HIV subverts the migration properties of dendritic cells to gain access to CD4+ T-cells in lymph nodes. Virus transmission to permissive T-cells occurs either in trans (without DCs infection, through viral capture and transmission), or in cis (following DCs productive infection, through the usual CD4-gp120 interaction), thereby inducing a robust infection. In trans infection, bound virions remain infectious over days and it is proposed that they are not degraded, but protected in non-lysosomal acidic organelles within the DCs close to the cell membrane thus contributing to the viral infectious potential during DCs' migration from the periphery to the lymphoid tissues. On arrival at lymphoid tissues, intact virions recycle back to DCs' cell surface allowing virus transmission to CD4+ T-cells. In terms of biological role, acts as a class I viral fusion protein. Under the current model, the protein has at least 3 conformational states: pre-fusion native state, pre-hairpin intermediate state, and post-fusion hairpin state. During fusion of viral and target intracellular membranes, the coiled coil regions (heptad repeats) assume a trimer-of-hairpins structure, positioning the fusion peptide in close proximity to the C-terminal region of the ectodomain. The formation of this structure appears to drive apposition and subsequent fusion of viral and target cell membranes. Complete fusion occurs in host cell endosomes and is dynamin-dependent, however some lipid transfer might occur at the plasma membrane. The virus undergoes clathrin-dependent internalization long before endosomal fusion, thus minimizing the surface exposure of conserved viral epitopes during fusion and reducing the efficacy of inhibitors targeting these epitopes. Membranes fusion leads to delivery of the nucleocapsid into the cytoplasm. This Homo sapiens (Human) protein is Envelope glycoprotein gp160.